A 249-amino-acid chain; its full sequence is uncharacterized protein (249 aa).

The first 36 residues, 1–36 (MAKSPARRCTAKVRRVLSRSVLILCWSLLGAAPAHA), serve as a signal peptide directing secretion. Residues 227–249 (ARQPPGRWVCPSSAGGPIGWHRQ) form a disordered region.

This is an uncharacterized protein from Mycobacterium tuberculosis (strain CDC 1551 / Oshkosh).